Reading from the N-terminus, the 219-residue chain is Adenylate kinase (219 aa).

10–15 (GAGKGT) is a binding site for ATP. Positions 30-59 (STGDMLRAAVKAGTPLGQQAKKVMDAGELV) are NMP. AMP-binding positions include Thr31, Arg36, 57-59 (ELV), 85-88 (GFPR), and Gln92. The tract at residues 122–159 (GRRVHPGSGRVYHVEHNPPKEEGKDDVTGEPLVQRDDD) is LID. ATP is bound by residues Arg123 and 132–133 (VY). Residues 129-152 (SGRVYHVEHNPPKEEGKDDVTGEP) form a disordered region. Over residues 133 to 152 (YHVEHNPPKEEGKDDVTGEP) the composition is skewed to basic and acidic residues. AMP is bound by residues Arg156 and Arg167. Gly203 is a binding site for ATP.

The protein belongs to the adenylate kinase family. As to quaternary structure, monomer.

The protein resides in the cytoplasm. It carries out the reaction AMP + ATP = 2 ADP. Its pathway is purine metabolism; AMP biosynthesis via salvage pathway; AMP from ADP: step 1/1. Functionally, catalyzes the reversible transfer of the terminal phosphate group between ATP and AMP. Plays an important role in cellular energy homeostasis and in adenine nucleotide metabolism. The chain is Adenylate kinase from Alkalilimnicola ehrlichii (strain ATCC BAA-1101 / DSM 17681 / MLHE-1).